The primary structure comprises 323 residues: Arginase (323 aa).

Residues His-119, Asp-142, His-144, and Asp-146 each coordinate Mn(2+). Residues 144 to 148 (HADIN), 155 to 157 (SKN), and Asp-198 each bind substrate. Mn(2+) is bound by residues Asp-247 and Asp-249. The substrate site is built by Thr-261 and Glu-292.

The protein belongs to the arginase family. As to quaternary structure, homotrimer. Mn(2+) serves as cofactor.

It carries out the reaction L-arginine + H2O = urea + L-ornithine. It participates in nitrogen metabolism; urea cycle; L-ornithine and urea from L-arginine: step 1/1. This is Arginase (car1) from Schizosaccharomyces pombe (strain 972 / ATCC 24843) (Fission yeast).